The following is a 273-amino-acid chain: MSIDFDWSKLDSELEAKVLHLLEGQVSNLSLPSYIKHLKVVDFHFGKVSPQITIQEIGDPDPQFYENEAFELANQELEGDQCSRNNVSPVLTDLPPYAAEHPFSRLAYFNPAFNSPGILSASGLTSPIPESRPSTPMDNHQERDRSNDFQVTAHVSYDGDANLSLEAVLSMNYPNSEFAVLPFKLSFIRISIDAIAVLAKMGKRTHLCFVDTLLHGTGEHASSVIRDLTVESIIGESNKQLLKNVAKVEKFVSEKVKRIIEDELVWPSYITIE.

Positions 1–273 (MSIDFDWSKL…LVWPSYITIE (273 aa)) constitute an SMP-LTD domain. Residues 124-145 (LTSPIPESRPSTPMDNHQERDR) are disordered.

The protein belongs to the MDM12 family. As to quaternary structure, component of the ER-mitochondria encounter structure (ERMES) or MDM complex, composed of mmm1, mdm10, mdm12 and mdm34. A mmm1 homodimer associates with one molecule of mdm12 on each side in a pairwise head-to-tail manner, and the SMP-LTD domains of mmm1 and mdm12 generate a continuous hydrophobic tunnel for phospholipid trafficking.

The protein resides in the mitochondrion outer membrane. Its subcellular location is the endoplasmic reticulum membrane. Component of the ERMES/MDM complex, which serves as a molecular tether to connect the endoplasmic reticulum (ER) and mitochondria. Components of this complex are involved in the control of mitochondrial shape and protein biogenesis, and function in nonvesicular lipid trafficking between the ER and mitochondria. Mdm12 is required for the interaction of the ER-resident membrane protein mmm1 and the outer mitochondrial membrane-resident beta-barrel protein mdm10. The mdm12-mmm1 subcomplex functions in the major beta-barrel assembly pathway that is responsible for biogenesis of all mitochondrial outer membrane beta-barrel proteins, and acts in a late step after the SAM complex. The mdm10-mdm12-mmm1 subcomplex further acts in the TOM40-specific pathway after the action of the mdm12-mmm1 complex. Essential for establishing and maintaining the structure of mitochondria and maintenance of mtDNA nucleoids. The polypeptide is Mitochondrial distribution and morphology protein 12 (Schizosaccharomyces pombe (strain 972 / ATCC 24843) (Fission yeast)).